The sequence spans 212 residues: Thiamine-phosphate synthase (212 aa).

38-42 (QLREK) provides a ligand contact to 4-amino-2-methyl-5-(diphosphooxymethyl)pyrimidine. Mg(2+) contacts are provided by Asp-71 and Asp-90. Position 138 (Lys-138) interacts with 4-amino-2-methyl-5-(diphosphooxymethyl)pyrimidine. Gly-166 is a 2-[(2R,5Z)-2-carboxy-4-methylthiazol-5(2H)-ylidene]ethyl phosphate binding site.

The protein belongs to the thiamine-phosphate synthase family. Mg(2+) is required as a cofactor.

It catalyses the reaction 2-[(2R,5Z)-2-carboxy-4-methylthiazol-5(2H)-ylidene]ethyl phosphate + 4-amino-2-methyl-5-(diphosphooxymethyl)pyrimidine + 2 H(+) = thiamine phosphate + CO2 + diphosphate. The enzyme catalyses 2-(2-carboxy-4-methylthiazol-5-yl)ethyl phosphate + 4-amino-2-methyl-5-(diphosphooxymethyl)pyrimidine + 2 H(+) = thiamine phosphate + CO2 + diphosphate. The catalysed reaction is 4-methyl-5-(2-phosphooxyethyl)-thiazole + 4-amino-2-methyl-5-(diphosphooxymethyl)pyrimidine + H(+) = thiamine phosphate + diphosphate. The protein operates within cofactor biosynthesis; thiamine diphosphate biosynthesis; thiamine phosphate from 4-amino-2-methyl-5-diphosphomethylpyrimidine and 4-methyl-5-(2-phosphoethyl)-thiazole: step 1/1. Its function is as follows. Condenses 4-methyl-5-(beta-hydroxyethyl)thiazole monophosphate (THZ-P) and 2-methyl-4-amino-5-hydroxymethyl pyrimidine pyrophosphate (HMP-PP) to form thiamine monophosphate (TMP). The sequence is that of Thiamine-phosphate synthase from Chlamydia abortus (strain DSM 27085 / S26/3) (Chlamydophila abortus).